The chain runs to 231 residues: Chromosome partition protein MukE (231 aa).

The disordered stretch occupies residues 211 to 231 (SLLADEEEQDYNEQAELEGEA). Acidic residues predominate over residues 214-231 (ADEEEQDYNEQAELEGEA).

It belongs to the MukE family. As to quaternary structure, interacts, and probably forms a ternary complex, with MukF and MukB. The complex formation is stimulated by calcium or magnesium.

The protein resides in the cytoplasm. Its subcellular location is the nucleoid. In terms of biological role, involved in chromosome condensation, segregation and cell cycle progression. May participate in facilitating chromosome segregation by condensation DNA from both sides of a centrally located replisome during cell division. Probably acts via its interaction with MukB and MukF. This is Chromosome partition protein MukE from Vibrio vulnificus (strain CMCP6).